Consider the following 368-residue polypeptide: MTSTALNTAGYQQQLDEKAERIQNIFEDFETPELEVFASPAEHYRMRAEFRMWHEGEDLYYVMFNQETREKYRVDQFPAASRLINDLMPLLVEALKPSQTLRHKLFQVDFLSTLSGEILVSLLYHRQLDEEWEVEIKKLKQCLNDEGFNLNIIGRARKMKIVADRDYVIEKLNVFDQTLTYKQVENSFTQPNGEVAQKMLEWAVDCTQDSDGDLLELYCGNGNFSLALAKNFERVLATELAKPSVESAQYNIAVNNIDNVQIVRMSAEDFTDAMAGKREFRRLKAQNVDLQSYNCNTIFVDPPRSGMDEGTCRMVQGYERIMYISCNPDTLKENLEILSQTHKITRFALFDQFPYTHHMEAGVLLERK.

Residues Gln-190, Tyr-218, Asn-223, Glu-239, and Asp-301 each contribute to the S-adenosyl-L-methionine site. Residue Cys-326 is the Nucleophile of the active site. Residue Glu-360 is the Proton acceptor of the active site.

It belongs to the class I-like SAM-binding methyltransferase superfamily. RNA M5U methyltransferase family. TrmA subfamily.

It catalyses the reaction uridine(54) in tRNA + S-adenosyl-L-methionine = 5-methyluridine(54) in tRNA + S-adenosyl-L-homocysteine + H(+). It carries out the reaction uridine(341) in tmRNA + S-adenosyl-L-methionine = 5-methyluridine(341) in tmRNA + S-adenosyl-L-homocysteine + H(+). Its function is as follows. Dual-specificity methyltransferase that catalyzes the formation of 5-methyluridine at position 54 (m5U54) in all tRNAs, and that of position 341 (m5U341) in tmRNA (transfer-mRNA). The protein is tRNA/tmRNA (uracil-C(5))-methyltransferase of Photobacterium profundum (strain SS9).